The primary structure comprises 591 residues: MPNPVRFVYRVDLRSPEEIFEHGFSTLGDVRNFFEHILSTNFGRSYFISTSETPTAAIRFFGSWLREYVPEHPRRAYLYEIRADQHFYNARATGENLLDLMRQRQVVFDSGDREMAQMGIRALRTSFAYQREWFTDGPIAAANVRSAWLVDAVPVEPGHAHHPAGRVVETTRINEPEMHNPHYQELQTQANDQPWLPTPGIATPVHLSIPQAASVADVSEGTSASLSFACPDWSPPSSNGENPLDKCIAEKIDNYNLQSLPQYASSVKELEDTPVYLRGIKTQKTFMLQADPQNNNVFLVEVNPKQKSSFPQTIFFWDVYQRICLKDLTGAQISLSLTAFTTQYAGQLKVHLSVSAVNAVNQKWKMTPQDIAITQFRVSSELLGQTENGLFWNTKSGGSQHDLYVCPLKNPPSDLEELQIIVDECTTHAQFVTMRAASTFFVDVQLGWYWRGYYYTPQLSGWSYQMKTPDGQIFYDLKTSKIFFVQDNQNVFFLHNKLNKQTGYSWDWVEWLKHDMNEDKDENFKWYFSRDDLTIPSVEGLNFRHIRCYADNQQLKVIISGSRWGGWYSTYDKVESNVEDKILVKDGFDRF.

The segment at 1–205 (MPNPVRFVYR…LPTPGIATPV (205 aa)) is mono-ADP ribosyltransferase (mART) domain. The interval 206–256 (HLSIPQAASVADVSEGTSASLSFACPDWSPPSSNGENPLDKCIAEKIDNYN) is NAD(+)-binding pocket. C230 and C247 are disulfide-bonded. The KELED motif, involved in host ER trafficking, solvent exposed in the crystal structure signature appears at 268–272 (KELED). The interval 273 to 439 (TPVYLRGIKT…QFVTMRAAST (167 aa)) is D2 domain. The segment at 440–591 (FFVDVQLGWY…ILVKDGFDRF (152 aa)) is D3 domain.

Belongs to the bacterial exotoxin subunit A family. As to quaternary structure, monomer. Binds to host (human) pulmonary surfactant-associated protein A1 (SFTPA1), the major mammalian protein component of pulmonary surfactant. Binds to host (human) surface annexin A2 (ANXA2) on the cell surface; anti-ANXA2 antibodies decrease binding to cells. Interacts with cytosolic host (human) NLRP3, which it ADP-ribosylates in vitro. 8 hours after treatment of HeLa cells with purified protein, a substantial amount is processed to 2 nearly equal-sized fragments. The disulfide bond between Cys-230 and Cys-247 is required to for the toxin to exert its mART and vacuolating activities within target cells, and for protein processing. Acidic pH in the endosome and retrograde transport are required for toxin cleavage, which is required for both toxin activities. Trypsin treatment under mild conditions leads to cleavage at Lys-305 and Lys-307; the 2 proteins fragments remain associated and can be internalized and vacuolate HeLa cells.

Its subcellular location is the cell membrane. It is found in the cytoplasm. The protein resides in the cell surface. It localises to the cell projection. The protein localises to the attachment organelle. Its subcellular location is the host cytoplasm. It is found in the host cytosol. The protein resides in the host endoplasmic reticulum. In vitro ADP-ribosylation is enhanced by dithiotheritol. In terms of biological role, the main virulence factor for this bacteria, a mono-ADP-ribosylating toxin (mART), that transfers the ADP-ribosyl group from NAD(+) to multiple target proteins in vitro. Also elicits cytopathic effects in mammalian cells, such as disorganization and disruption of respiratory epithelial integrity in tracheal epithelium and vacuolization in the cytoplasm of CHO and HeLa cells as well as in mice and baboons. Treatment of mice or baboons with CARDS elicits a response that is consistent with human M.pneumoniae infections and mouse models of both infection and intoxication, suggesting that CARDS toxin is sufficient to cause prolonged inflammatory responses and airway dysfunction. Treatment of baboons with CARDS induces a number of cytokines; G-CSF (40 fold), IL-1Ra (10 fold), IL-6 and IL-8 (333 and 100 fold, respectively), MIP-1a (5 fold), and RANTES (9 fold). Treatment of mice gives a similar response. Binds phosphatidyl choline, dipalmitoylphosphatidylcholine (DPPC) and sphingomyelin via domains D2 plus D3. Has at least 2 host receptors SFTPA1 and ANXA2. Internalized by a clathrin-mediated process; protein is rapidly taken up at 37 degrees Celsius. Clathrin-independent or caveolin-dependent endocytosis were not detected. In HeLa cells internalized CARDS trafficks toward the nucleus by retrograde transport from early to late endosomes, then the Golgi apparatus; at 16 hours most toxin is concentrated in the perinuclear region in the host endoplasmic reticulum (ER). Failure to localize to the host ER prevents ADP-ribosylation and vacuolization. An acidic compartment is required to mediate retrotransport and processing of toxin into an N-terminal fragment with mART activity and a C-terminal fragment that is able to induce vacuolization. Functionally, induces the host NLRP3 inflammasome to release interleukin-1 beta (IL-1 beta); IL-1 beta release requires ADP-ribosylation activity and uptake by host macrophages. In the host colocalizes with the NLRP3 inflammasome; ADP-ribosylates NLRP3 in vitro. ADP-ribosylation of NLRP3 may lead to hyperinflammation. This chain is ADP-ribosylating toxin CARDS, found in Mycoplasma pneumoniae (strain ATCC 29342 / M129 / Subtype 1) (Mycoplasmoides pneumoniae).